The following is a 118-amino-acid chain: Small ribosomal subunit protein uS13 (118 aa).

The interval 94–118 (GLPLRGQRTRTNARTRKGPRKAIRK) is disordered.

This sequence belongs to the universal ribosomal protein uS13 family. Part of the 30S ribosomal subunit. Forms a loose heterodimer with protein S19. Forms two bridges to the 50S subunit in the 70S ribosome.

In terms of biological role, located at the top of the head of the 30S subunit, it contacts several helices of the 16S rRNA. In the 70S ribosome it contacts the 23S rRNA (bridge B1a) and protein L5 of the 50S subunit (bridge B1b), connecting the 2 subunits; these bridges are implicated in subunit movement. Contacts the tRNAs in the A and P-sites. This chain is Small ribosomal subunit protein uS13, found in Stenotrophomonas maltophilia (strain R551-3).